A 493-amino-acid polypeptide reads, in one-letter code: Probable cytosol aminopeptidase (493 aa).

Positions 262 and 267 each coordinate Mn(2+). Lys-274 is an active-site residue. Mn(2+)-binding residues include Asp-286, Asp-345, and Glu-347. Arg-349 is an active-site residue.

The protein belongs to the peptidase M17 family. The cofactor is Mn(2+).

The protein localises to the cytoplasm. It catalyses the reaction Release of an N-terminal amino acid, Xaa-|-Yaa-, in which Xaa is preferably Leu, but may be other amino acids including Pro although not Arg or Lys, and Yaa may be Pro. Amino acid amides and methyl esters are also readily hydrolyzed, but rates on arylamides are exceedingly low.. The catalysed reaction is Release of an N-terminal amino acid, preferentially leucine, but not glutamic or aspartic acids.. Presumably involved in the processing and regular turnover of intracellular proteins. Catalyzes the removal of unsubstituted N-terminal amino acids from various peptides. In Cyanothece sp. (strain PCC 7425 / ATCC 29141), this protein is Probable cytosol aminopeptidase.